A 504-amino-acid polypeptide reads, in one-letter code: Anaerobic nitric oxide reductase transcription regulator NorR (504 aa).

Residue D57 is modified to 4-aspartylphosphate. The Sigma-54 factor interaction domain occupies 187–416; sequence MIGLSPGMTQ…LEHAIHRAVV (230 aa). Residues 215-222 and 278-287 contribute to the ATP site; these read GETGTGKE and ADNGTLFLDE. Residues 479–498 constitute a DNA-binding region (H-T-H motif); the sequence is WAACARMLETDVANLHRLAK.

It functions in the pathway nitrogen metabolism; nitric oxide reduction. Functionally, required for the expression of anaerobic nitric oxide (NO) reductase, acts as a transcriptional activator for at least the norVW operon. Activation also requires sigma-54. The protein is Anaerobic nitric oxide reductase transcription regulator NorR of Shigella boydii serotype 4 (strain Sb227).